The chain runs to 180 residues: Large ribosomal subunit protein uL5 (180 aa).

Belongs to the universal ribosomal protein uL5 family. As to quaternary structure, part of the 50S ribosomal subunit; part of the 5S rRNA/L5/L18/L25 subcomplex. Contacts the 5S rRNA and the P site tRNA. Forms a bridge to the 30S subunit in the 70S ribosome.

This is one of the proteins that bind and probably mediate the attachment of the 5S RNA into the large ribosomal subunit, where it forms part of the central protuberance. In the 70S ribosome it contacts protein S13 of the 30S subunit (bridge B1b), connecting the 2 subunits; this bridge is implicated in subunit movement. Contacts the P site tRNA; the 5S rRNA and some of its associated proteins might help stabilize positioning of ribosome-bound tRNAs. This is Large ribosomal subunit protein uL5 from Lactobacillus acidophilus (strain ATCC 700396 / NCK56 / N2 / NCFM).